Consider the following 662-residue polypeptide: FAST kinase domain-containing protein 3, mitochondrial (662 aa).

The 59-residue stretch at 591 to 649 (IALCIDGPKRFCSNSKHLLGKEAIKQRHLQLLGYQVVQIPYHEIGMLKSRRELVEYLQR) folds into the RAP domain.

It belongs to the FAST kinase family. Expression detected in spleen, thymus, testis, ovary, colon, heart, smooth muscle, kidney, brain, lung, liver and white adipose tissue with highest expression in liver and thyroid.

The protein localises to the mitochondrion. Functionally, required for normal mitochondrial respiration. Increases steady-state levels and half-lives of a subset of mature mitochondrial mRNAs MT-ND2, MT-ND3, MT-CYTB, MT-CO2, and MT-ATP8/6. Promotes MT-CO1 mRNA translation and increases mitochondrial complex IV assembly and activity. This Homo sapiens (Human) protein is FAST kinase domain-containing protein 3, mitochondrial (FASTKD3).